A 491-amino-acid chain; its full sequence is Glutamyl-tRNA(Gln) amidotransferase subunit A (491 aa).

Active-site charge relay system residues include Lys77 and Ser152. Catalysis depends on Ser176, which acts as the Acyl-ester intermediate.

This sequence belongs to the amidase family. GatA subfamily. In terms of assembly, heterotrimer of A, B and C subunits.

It carries out the reaction L-glutamyl-tRNA(Gln) + L-glutamine + ATP + H2O = L-glutaminyl-tRNA(Gln) + L-glutamate + ADP + phosphate + H(+). Its function is as follows. Allows the formation of correctly charged Gln-tRNA(Gln) through the transamidation of misacylated Glu-tRNA(Gln) in organisms which lack glutaminyl-tRNA synthetase. The reaction takes place in the presence of glutamine and ATP through an activated gamma-phospho-Glu-tRNA(Gln). The protein is Glutamyl-tRNA(Gln) amidotransferase subunit A (gatA) of Chlamydia muridarum (strain MoPn / Nigg).